The primary structure comprises 422 residues: UDP-N-acetylglucosamine 1-carboxyvinyltransferase (422 aa).

A phosphoenolpyruvate-binding site is contributed by 23–24 (KN). Arg-92 contributes to the UDP-N-acetyl-alpha-D-glucosamine binding site. Cys-116 (proton donor) is an active-site residue. Residue Cys-116 is modified to 2-(S-cysteinyl)pyruvic acid O-phosphothioketal. UDP-N-acetyl-alpha-D-glucosamine is bound by residues 121–125 (RPVDL), 161–164 (KVSV), Asp-306, and Ile-328.

It belongs to the EPSP synthase family. MurA subfamily.

The protein resides in the cytoplasm. The catalysed reaction is phosphoenolpyruvate + UDP-N-acetyl-alpha-D-glucosamine = UDP-N-acetyl-3-O-(1-carboxyvinyl)-alpha-D-glucosamine + phosphate. It functions in the pathway cell wall biogenesis; peptidoglycan biosynthesis. In terms of biological role, cell wall formation. Adds enolpyruvyl to UDP-N-acetylglucosamine. This Aliivibrio salmonicida (strain LFI1238) (Vibrio salmonicida (strain LFI1238)) protein is UDP-N-acetylglucosamine 1-carboxyvinyltransferase.